Here is a 178-residue protein sequence, read N- to C-terminus: NADH-ubiquinone oxidoreductase chain 6 (178 aa).

The next 5 helical transmembrane spans lie at 1–21 (MMTY…VGFS), 25–45 (SPIY…GIVL), 48–68 (GGSF…LVVF), 89–109 (VLLT…YLLL), and 152–172 (YGYW…IVVM).

Belongs to the complex I subunit 6 family.

Its subcellular location is the mitochondrion membrane. It catalyses the reaction a ubiquinone + NADH + 5 H(+)(in) = a ubiquinol + NAD(+) + 4 H(+)(out). Its function is as follows. Core subunit of the mitochondrial membrane respiratory chain NADH dehydrogenase (Complex I) that is believed to belong to the minimal assembly required for catalysis. Complex I functions in the transfer of electrons from NADH to the respiratory chain. The immediate electron acceptor for the enzyme is believed to be ubiquinone. The sequence is that of NADH-ubiquinone oxidoreductase chain 6 (MT-ND6) from Pseudosoriculus fumidus (Taiwanese brown-toothed shrew).